A 592-amino-acid chain; its full sequence is Elongation factor 1 alpha-like protein (592 aa).

2 disordered regions span residues 1 to 35 (MSRHRDVKNLDLDDYELDEEPGEEELTEEQEEEFR) and 78 to 159 (SSKA…KQNP). Positions 12–32 (LDDYELDEEPGEEELTEEQEE) are enriched in acidic residues. The span at 82–111 (GAKEKQNTDSQKEKKQNKSKEALADAKDPL) shows a compositional bias: basic and acidic residues. The segment covering 113-124 (ESSNGIKNLSLN) has biased composition (polar residues). Over residues 137-151 (VKMKNSSESDNQPEK) the composition is skewed to basic and acidic residues. Positions 175-401 (KPVVHLVVTG…DQLVPPEKPY (227 aa)) constitute a tr-type G domain. Residues 184-191 (GHVDSGKS) are G1. 184-191 (GHVDSGKS) lines the GTP pocket. Residues 240-244 (GVTMD) are G2. Residues 261-264 (DAPG) form a G3 region. GTP is bound by residues 323–326 (NKLD) and 352–355 (FKTS). Residues 323-326 (NKLD) form a G4 region. The segment at 363-365 (SAI) is G5.

Belongs to the TRAFAC class translation factor GTPase superfamily. Classic translation factor GTPase family. Component of the Dom34-Hbs1 complex, also named Pelota-HBS1L complex, composed of dom34 and hbs1.

It localises to the cytoplasm. The catalysed reaction is GTP + H2O = GDP + phosphate + H(+). In terms of biological role, GTPase component of the Dom34-Hbs1 complex, a complex that recognizes stalled ribosomes and triggers the No-Go Decay (NGD) pathway. The Dom34-Hbs1 complex recognizes ribosomes stalled at the 3' end of an mRNA and engages stalled ribosomes by destabilizing mRNA in the mRNA channel. Following ribosome-binding, the Pelota-HBS1L complex promotes the disassembly of stalled ribosomes, followed by degradation of damaged mRNAs as part of the NGD pathway. In Schizosaccharomyces pombe (strain 972 / ATCC 24843) (Fission yeast), this protein is Elongation factor 1 alpha-like protein.